Reading from the N-terminus, the 344-residue chain is Phosphate acyltransferase (344 aa).

Belongs to the PlsX family. Homodimer. Probably interacts with PlsY.

It is found in the cytoplasm. It carries out the reaction a fatty acyl-[ACP] + phosphate = an acyl phosphate + holo-[ACP]. It functions in the pathway lipid metabolism; phospholipid metabolism. Its function is as follows. Catalyzes the reversible formation of acyl-phosphate (acyl-PO(4)) from acyl-[acyl-carrier-protein] (acyl-ACP). This enzyme utilizes acyl-ACP as fatty acyl donor, but not acyl-CoA. The sequence is that of Phosphate acyltransferase from Enterobacter sp. (strain 638).